Reading from the N-terminus, the 638-residue chain is 1-deoxy-D-xylulose-5-phosphate synthase (638 aa).

Thiamine diphosphate is bound by residues H79 and 120 to 122 (AHS). D151 contacts Mg(2+). Residues 152–153 (GA), N180, Y289, and E371 each bind thiamine diphosphate. N180 is a binding site for Mg(2+).

This sequence belongs to the transketolase family. DXPS subfamily. In terms of assembly, homodimer. Mg(2+) is required as a cofactor. The cofactor is thiamine diphosphate.

The enzyme catalyses D-glyceraldehyde 3-phosphate + pyruvate + H(+) = 1-deoxy-D-xylulose 5-phosphate + CO2. Its pathway is metabolic intermediate biosynthesis; 1-deoxy-D-xylulose 5-phosphate biosynthesis; 1-deoxy-D-xylulose 5-phosphate from D-glyceraldehyde 3-phosphate and pyruvate: step 1/1. In terms of biological role, catalyzes the acyloin condensation reaction between C atoms 2 and 3 of pyruvate and glyceraldehyde 3-phosphate to yield 1-deoxy-D-xylulose-5-phosphate (DXP). The polypeptide is 1-deoxy-D-xylulose-5-phosphate synthase (Rhizobium etli (strain CIAT 652)).